The sequence spans 288 residues: Shikimate dehydrogenase (NADP(+)) (288 aa).

Shikimate-binding positions include 18–20 (SRS) and T65. The Proton acceptor role is filled by K69. NADP(+) is bound at residue E81. N90 and D106 together coordinate shikimate. NADP(+) contacts are provided by residues 131 to 135 (GAGGA), 155 to 160 (NRTLAK), and M223. Y225 lines the shikimate pocket. G246 lines the NADP(+) pocket.

Belongs to the shikimate dehydrogenase family. As to quaternary structure, homodimer.

The catalysed reaction is shikimate + NADP(+) = 3-dehydroshikimate + NADPH + H(+). The protein operates within metabolic intermediate biosynthesis; chorismate biosynthesis; chorismate from D-erythrose 4-phosphate and phosphoenolpyruvate: step 4/7. In terms of biological role, involved in the biosynthesis of the chorismate, which leads to the biosynthesis of aromatic amino acids. Catalyzes the reversible NADPH linked reduction of 3-dehydroshikimate (DHSA) to yield shikimate (SA). In Verminephrobacter eiseniae (strain EF01-2), this protein is Shikimate dehydrogenase (NADP(+)).